The chain runs to 57 residues: Potassium channel toxin alpha-KTx 26.3 (57 aa).

The signal sequence occupies residues 1–15 (MSGLSVFILIALVLS). The propeptide occupies 16–24 (VIIDVLNNS). 3 disulfides stabilise this stretch: cysteine 30–cysteine 48, cysteine 34–cysteine 53, and cysteine 38–cysteine 55.

This sequence belongs to the short scorpion toxin superfamily. Potassium channel inhibitor family. Alpha-KTx 26 subfamily. As to expression, expressed by the venom gland.

The protein resides in the secreted. Recombinant toxin that reversibly inhibits the potassium current of mKv1.3/KCNA3 channel stably expressed in COS7 cells (IC(50)=150 nM). The polypeptide is Potassium channel toxin alpha-KTx 26.3 (Mesobuthus gibbosus (Mediterranean checkered scorpion)).